The primary structure comprises 163 residues: UPF0262 protein RPD_4278 (163 aa).

It belongs to the UPF0262 family.

The sequence is that of UPF0262 protein RPD_4278 from Rhodopseudomonas palustris (strain BisB5).